The chain runs to 127 residues: Small ribosomal subunit protein eS8 (127 aa).

The disordered stretch occupies residues 1 to 25 (MTIFQGKSGKKPTGGNLKQAKKKRR).

This sequence belongs to the eukaryotic ribosomal protein eS8 family. As to quaternary structure, part of the 30S ribosomal subunit.

This chain is Small ribosomal subunit protein eS8, found in Thermoplasma volcanium (strain ATCC 51530 / DSM 4299 / JCM 9571 / NBRC 15438 / GSS1).